Here is a 192-residue protein sequence, read N- to C-terminus: MAPLGGVPGLVLLFSGKRKSGKDFVTEALQSRLGADVCAILRLSGPLKEQYAQEHGLDFQRLMDASTYKEAYRSDMIRWGEEKRQADPGFFCRKIVEGVCQPVWLVSDTRRVSDIQWFQEAYGAVTQTVRVVATEESRQQRGWVFTPGVDDAESECGLDNFRTFDWVIENHGDEQHLEEQLEHLIEFIRSRL.

Residues 17–23 (KRKSGKD) and arginine 141 contribute to the ATP site. Asparagine 170 is a substrate binding site. Histidine 171 and glutamine 180 together coordinate ATP.

Monomer.

It localises to the cytoplasm. It is found in the cytosol. It catalyses the reaction (R)-5-phosphomevalonate + ATP = (R)-5-diphosphomevalonate + ADP. Its pathway is isoprenoid biosynthesis; isopentenyl diphosphate biosynthesis via mevalonate pathway; isopentenyl diphosphate from (R)-mevalonate: step 2/3. Catalyzes the reversible ATP-dependent phosphorylation of mevalonate 5-phosphate to produce mevalonate diphosphate and ADP, a key step in the mevalonic acid mediated biosynthesis of isopentenyl diphosphate and other polyisoprenoid metabolites. The polypeptide is Phosphomevalonate kinase (PMVK) (Bos taurus (Bovine)).